The following is a 371-amino-acid chain: Queuine tRNA-ribosyltransferase (371 aa).

The active-site Proton acceptor is the aspartate 90. Substrate is bound by residues 90–94 (DSGGF), aspartate 144, glutamine 188, and glycine 215. Residues 246–252 (GVGTPED) are RNA binding. Catalysis depends on aspartate 265, which acts as the Nucleophile. Residues 270-274 (TRNAR) form an RNA binding; important for wobble base 34 recognition region. The Zn(2+) site is built by cysteine 303, cysteine 305, cysteine 308, and histidine 334.

It belongs to the queuine tRNA-ribosyltransferase family. Homodimer. Within each dimer, one monomer is responsible for RNA recognition and catalysis, while the other monomer binds to the replacement base PreQ1. Zn(2+) serves as cofactor.

The catalysed reaction is 7-aminomethyl-7-carbaguanine + guanosine(34) in tRNA = 7-aminomethyl-7-carbaguanosine(34) in tRNA + guanine. Its pathway is tRNA modification; tRNA-queuosine biosynthesis. Its function is as follows. Catalyzes the base-exchange of a guanine (G) residue with the queuine precursor 7-aminomethyl-7-deazaguanine (PreQ1) at position 34 (anticodon wobble position) in tRNAs with GU(N) anticodons (tRNA-Asp, -Asn, -His and -Tyr). Catalysis occurs through a double-displacement mechanism. The nucleophile active site attacks the C1' of nucleotide 34 to detach the guanine base from the RNA, forming a covalent enzyme-RNA intermediate. The proton acceptor active site deprotonates the incoming PreQ1, allowing a nucleophilic attack on the C1' of the ribose to form the product. After dissociation, two additional enzymatic reactions on the tRNA convert PreQ1 to queuine (Q), resulting in the hypermodified nucleoside queuosine (7-(((4,5-cis-dihydroxy-2-cyclopenten-1-yl)amino)methyl)-7-deazaguanosine). This is Queuine tRNA-ribosyltransferase from Neisseria gonorrhoeae (strain NCCP11945).